The primary structure comprises 278 residues: Nudix hydrolase 2 (278 aa).

Residues S110–C242 form the Nudix hydrolase domain. The Nudix box motif lies at G147–G168. A Mg(2+)-binding site is contributed by E162. The Proton acceptor role is filled by E165. E166 contributes to the Mg(2+) binding site.

The protein belongs to the Nudix hydrolase family. Mg(2+) is required as a cofactor. Requires Mn(2+) as cofactor. As to expression, expressed in roots, stems and leaves.

It carries out the reaction ADP-D-ribose + H2O = D-ribose 5-phosphate + AMP + 2 H(+). It catalyses the reaction NAD(+) + H2O = beta-nicotinamide D-ribonucleotide + AMP + 2 H(+). The catalysed reaction is NADH + H2O = reduced beta-nicotinamide D-ribonucleotide + AMP + 2 H(+). Its function is as follows. Probably mediates the hydrolysis of some nucleoside diphosphate derivatives. In vitro, it can use both NADH and ADP-ribose as substrates; however the relevance of such substrates in vivo is unclear. Confers tolerance to oxidative stress. The chain is Nudix hydrolase 2 from Arabidopsis thaliana (Mouse-ear cress).